The following is a 289-amino-acid chain: Phenylalanine-4-hydroxylase (289 aa).

3 residues coordinate Fe cation: His144, His149, and Glu189.

It belongs to the biopterin-dependent aromatic amino acid hydroxylase family. It depends on Fe(2+) as a cofactor.

The catalysed reaction is (6R)-L-erythro-5,6,7,8-tetrahydrobiopterin + L-phenylalanine + O2 = (4aS,6R)-4a-hydroxy-L-erythro-5,6,7,8-tetrahydrobiopterin + L-tyrosine. The protein operates within amino-acid degradation; L-phenylalanine degradation; acetoacetate and fumarate from L-phenylalanine: step 1/6. The polypeptide is Phenylalanine-4-hydroxylase (phhA) (Vibrio cholerae serotype O1 (strain ATCC 39315 / El Tor Inaba N16961)).